Consider the following 40-residue polypeptide: uncharacterized protein (40 aa).

This is an uncharacterized protein from Escherichia coli (Bacteriophage T4).